We begin with the raw amino-acid sequence, 141 residues long: Large ribosomal subunit protein uL16 (141 aa).

Residues Met-1–Met-17 show a composition bias toward basic residues. The segment at Met-1–Asn-29 is disordered.

The protein belongs to the universal ribosomal protein uL16 family. As to quaternary structure, part of the 50S ribosomal subunit.

Its function is as follows. Binds 23S rRNA and is also seen to make contacts with the A and possibly P site tRNAs. The sequence is that of Large ribosomal subunit protein uL16 from Flavobacterium psychrophilum (strain ATCC 49511 / DSM 21280 / CIP 103535 / JIP02/86).